Consider the following 582-residue polypeptide: ATP-dependent lipid A-core flippase (582 aa).

5 helical membrane-spanning segments follow: residues 16–36 (LWPMISPFKTGLIVAAIALIL), 63–83 (ILVWMPLVVIGLMVLRGVSGF), 153–173 (IIGLFAMMFYYSWQLSLILVV), 253–273 (PLIQFIASLALAFVLYAASFP), and 275–295 (VMETLTAGTITVVFSSMIALM). The region spanning 28 to 310 (IVAAIALILN…LTNVNAQFQR (283 aa)) is the ABC transmembrane type-1 domain. Residues 342–578 (IAFDHVTFSY…QGVYAQLHQL (237 aa)) enclose the ABC transporter domain. Residue 376-383 (GRSGSGKS) coordinates ATP.

The protein belongs to the ABC transporter superfamily. Lipid exporter (TC 3.A.1.106) family. As to quaternary structure, homodimer.

The protein localises to the cell inner membrane. The catalysed reaction is ATP + H2O + lipid A-core oligosaccharideSide 1 = ADP + phosphate + lipid A-core oligosaccharideSide 2.. Its function is as follows. Involved in lipopolysaccharide (LPS) biosynthesis. Translocates lipid A-core from the inner to the outer leaflet of the inner membrane. Transmembrane domains (TMD) form a pore in the inner membrane and the ATP-binding domain (NBD) is responsible for energy generation. This is ATP-dependent lipid A-core flippase from Sodalis glossinidius (strain morsitans).